A 220-amino-acid chain; its full sequence is Thiamine-phosphate synthase (220 aa).

4-amino-2-methyl-5-(diphosphooxymethyl)pyrimidine contacts are provided by residues 38–42 and N70; that span reads QYRDK. Mg(2+) contacts are provided by D71 and D90. T109 is a 4-amino-2-methyl-5-(diphosphooxymethyl)pyrimidine binding site. 135 to 137 is a 2-[(2R,5Z)-2-carboxy-4-methylthiazol-5(2H)-ylidene]ethyl phosphate binding site; sequence TVS. K138 is a binding site for 4-amino-2-methyl-5-(diphosphooxymethyl)pyrimidine. Residues G171 and 191 to 192 contribute to the 2-[(2R,5Z)-2-carboxy-4-methylthiazol-5(2H)-ylidene]ethyl phosphate site; that span reads IS.

The protein belongs to the thiamine-phosphate synthase family. It depends on Mg(2+) as a cofactor.

It carries out the reaction 2-[(2R,5Z)-2-carboxy-4-methylthiazol-5(2H)-ylidene]ethyl phosphate + 4-amino-2-methyl-5-(diphosphooxymethyl)pyrimidine + 2 H(+) = thiamine phosphate + CO2 + diphosphate. It catalyses the reaction 2-(2-carboxy-4-methylthiazol-5-yl)ethyl phosphate + 4-amino-2-methyl-5-(diphosphooxymethyl)pyrimidine + 2 H(+) = thiamine phosphate + CO2 + diphosphate. The catalysed reaction is 4-methyl-5-(2-phosphooxyethyl)-thiazole + 4-amino-2-methyl-5-(diphosphooxymethyl)pyrimidine + H(+) = thiamine phosphate + diphosphate. Its pathway is cofactor biosynthesis; thiamine diphosphate biosynthesis; thiamine phosphate from 4-amino-2-methyl-5-diphosphomethylpyrimidine and 4-methyl-5-(2-phosphoethyl)-thiazole: step 1/1. Functionally, condenses 4-methyl-5-(beta-hydroxyethyl)thiazole monophosphate (THZ-P) and 2-methyl-4-amino-5-hydroxymethyl pyrimidine pyrophosphate (HMP-PP) to form thiamine monophosphate (TMP). This is Thiamine-phosphate synthase from Agrobacterium fabrum (strain C58 / ATCC 33970) (Agrobacterium tumefaciens (strain C58)).